We begin with the raw amino-acid sequence, 195 residues long: Thymidine kinase (195 aa).

ATP is bound by residues Gly15–Ser22, Glu23, Ser57–His58, and Asp88–Gln91. Glu89 serves as the catalytic Proton acceptor. Phe120 lines the substrate pocket. Residues Cys145 and Cys148 each coordinate Zn(2+). Tyr179 contacts substrate. Residues Cys183 and Cys186 each coordinate Zn(2+).

The protein belongs to the thymidine kinase family.

It is found in the cytoplasm. It catalyses the reaction thymidine + ATP = dTMP + ADP + H(+). The polypeptide is Thymidine kinase (Clostridium acetobutylicum (strain ATCC 824 / DSM 792 / JCM 1419 / IAM 19013 / LMG 5710 / NBRC 13948 / NRRL B-527 / VKM B-1787 / 2291 / W)).